A 304-amino-acid chain; its full sequence is Nod factor export ATP-binding protein I (304 aa).

One can recognise an ABC transporter domain in the interval 6 to 236; sequence IEFDKVKKSY…EIGCDVIEIF (231 aa). 38–45 serves as a coordination point for ATP; it reads GPNGAGKT.

The protein belongs to the ABC transporter superfamily. Lipooligosaccharide exporter (TC 3.A.1.102) family. In terms of assembly, the complex is composed of two ATP-binding proteins (NodI) and two transmembrane proteins (NodJ).

Its subcellular location is the cell inner membrane. Its function is as follows. Part of the ABC transporter complex NodIJ involved in the export of the nodulation factors (Nod factors), the bacterial signal molecules that induce symbiosis and subsequent nodulation induction. Nod factors are LCO (lipo-chitin oligosaccharide), a modified beta-1,4-linked N-acetylglucosamine oligosaccharide. This subunit is responsible for energy coupling to the transport system. The sequence is that of Nod factor export ATP-binding protein I from Paraburkholderia xenovorans (strain LB400).